Reading from the N-terminus, the 546-residue chain is Chaperonin GroEL 1 (546 aa).

ATP-binding positions include 30-33 (TLGP), K51, 87-91 (DGTTT), G415, 479-481 (NAA), and D495. Positions 526–546 (KEDAPMPGGMPGGMGGMGMDM) are disordered. Residues 534–546 (GMPGGMGGMGMDM) are compositionally biased toward gly residues.

The protein belongs to the chaperonin (HSP60) family. In terms of assembly, forms a cylinder of 14 subunits composed of two heptameric rings stacked back-to-back. Interacts with the co-chaperonin GroES.

Its subcellular location is the cytoplasm. The catalysed reaction is ATP + H2O + a folded polypeptide = ADP + phosphate + an unfolded polypeptide.. Its function is as follows. Together with its co-chaperonin GroES, plays an essential role in assisting protein folding. The GroEL-GroES system forms a nano-cage that allows encapsulation of the non-native substrate proteins and provides a physical environment optimized to promote and accelerate protein folding. In Burkholderia pseudomallei (strain 1106a), this protein is Chaperonin GroEL 1.